Reading from the N-terminus, the 429-residue chain is UDP-N-acetylglucosamine 1-carboxyvinyltransferase (429 aa).

22–23 contacts phosphoenolpyruvate; the sequence is KN. Residue Arg102 participates in UDP-N-acetyl-alpha-D-glucosamine binding. Cys126 (proton donor) is an active-site residue. Cys126 carries the 2-(S-cysteinyl)pyruvic acid O-phosphothioketal modification. UDP-N-acetyl-alpha-D-glucosamine is bound by residues 131–135, Asp316, and Ile338; that span reads RPVDL.

The protein belongs to the EPSP synthase family. MurA subfamily.

It is found in the cytoplasm. It carries out the reaction phosphoenolpyruvate + UDP-N-acetyl-alpha-D-glucosamine = UDP-N-acetyl-3-O-(1-carboxyvinyl)-alpha-D-glucosamine + phosphate. The protein operates within cell wall biogenesis; peptidoglycan biosynthesis. Functionally, cell wall formation. Adds enolpyruvyl to UDP-N-acetylglucosamine. This chain is UDP-N-acetylglucosamine 1-carboxyvinyltransferase, found in Rhodopseudomonas palustris (strain BisA53).